The following is a 91-amino-acid chain: Putative regulatory protein DSY2730 (91 aa).

Belongs to the RemA family.

The sequence is that of Putative regulatory protein DSY2730 from Desulfitobacterium hafniense (strain Y51).